A 548-amino-acid polypeptide reads, in one-letter code: Chaperonin GroEL (548 aa).

ATP is bound by residues 30–33 (TLGP), K51, 87–91 (DGTTT), G415, 479–481 (NAA), and D495. Residues 526–548 (REDKSSDVASSPAGGMGGMGGMM) are disordered. Residues 539–548 (GGMGGMGGMM) show a composition bias toward gly residues.

It belongs to the chaperonin (HSP60) family. In terms of assembly, forms a cylinder of 14 subunits composed of two heptameric rings stacked back-to-back. Interacts with the co-chaperonin GroES.

The protein resides in the cytoplasm. The enzyme catalyses ATP + H2O + a folded polypeptide = ADP + phosphate + an unfolded polypeptide.. Functionally, together with its co-chaperonin GroES, plays an essential role in assisting protein folding. The GroEL-GroES system forms a nano-cage that allows encapsulation of the non-native substrate proteins and provides a physical environment optimized to promote and accelerate protein folding. This Buchnera aphidicola subsp. Schizaphis graminum (strain Sg) protein is Chaperonin GroEL.